The primary structure comprises 379 residues: L-demethylnoviosyl transferase (379 aa).

Belongs to the glycosyltransferase 28 family.

It catalyses the reaction dTDP-4-O-demethyl-beta-L-noviose + novobiocic acid = desmethyldescarbamoylnovobiocin + dTDP + H(+). Its pathway is antibiotic biosynthesis; novobiocin biosynthesis. Its activity is regulated as follows. Inhibited by TDP-L-rhamnose, the sugar donor that most closely structurally resembles the natural substrate dTDP-beta-L-noviose. Functionally, catalyzes the transfer of L-noviose from dTDP-4-O-demethyl-beta-L-noviose to the phenolic oxygen of novobiocic acid, creating the full ABC ring system in the novobiocin biosynthesis pathway. Novobiocin is an aminocoumarin family antibiotic that targets bacterial DNA gyrases. Also shows activity with variant coumarin aglycones, suggesting it may be a promiscuous catalyst for noviosylation of a range of planar scaffolds. Does not show activity with TDP-L-rhamnose. In Streptomyces niveus (Streptomyces spheroides), this protein is L-demethylnoviosyl transferase (novM).